The primary structure comprises 309 residues: Probable lipid kinase YegS-like (309 aa).

The DAGKc domain maps to 1-134 (MAPSHWRVIL…VDLLRIDADH (134 aa)). Residues Thr39, 65-71 (GDGTLSE), and Thr96 contribute to the ATP site. Leu219, Asp222, and Leu224 together coordinate Mg(2+). Glu280 serves as the catalytic Proton acceptor.

This sequence belongs to the diacylglycerol/lipid kinase family. YegS lipid kinase subfamily. Requires Mg(2+) as cofactor. Ca(2+) serves as cofactor.

The protein localises to the cytoplasm. Its function is as follows. Probably phosphorylates lipids; the in vivo substrate is unknown. The sequence is that of Probable lipid kinase YegS-like from Xanthomonas euvesicatoria pv. vesicatoria (strain 85-10) (Xanthomonas campestris pv. vesicatoria).